A 136-amino-acid chain; its full sequence is Large-conductance mechanosensitive channel (136 aa).

A run of 2 helical transmembrane segments spans residues Ala-9–Phe-29 and Ile-79–Ile-99.

The protein belongs to the MscL family. In terms of assembly, homopentamer.

The protein localises to the cell inner membrane. Functionally, channel that opens in response to stretch forces in the membrane lipid bilayer. May participate in the regulation of osmotic pressure changes within the cell. The chain is Large-conductance mechanosensitive channel from Shewanella putrefaciens (strain CN-32 / ATCC BAA-453).